The sequence spans 185 residues: Ribosome-recycling factor (185 aa).

The protein belongs to the RRF family.

It is found in the cytoplasm. In terms of biological role, responsible for the release of ribosomes from messenger RNA at the termination of protein biosynthesis. May increase the efficiency of translation by recycling ribosomes from one round of translation to another. This Bacillus anthracis (strain A0248) protein is Ribosome-recycling factor.